The chain runs to 58 residues: GFAWTMLCMNEIFYFIGALGPLFIVLALTGLELGVAILQAYVFTILICIYLNDAINLH.

Transmembrane regions (helical) follow at residues Glu11–Leu31 and Val35–Ile55.

This sequence belongs to the ATPase A chain family. As to quaternary structure, F-type ATPases have 2 components, CF(1) - the catalytic core - and CF(0) - the membrane proton channel. CF(1) has five subunits: alpha(3), beta(3), gamma(1), delta(1), epsilon(1). CF(0) has three main subunits: a, b and c.

The protein localises to the mitochondrion inner membrane. Mitochondrial membrane ATP synthase (F(1)F(0) ATP synthase or Complex V) produces ATP from ADP in the presence of a proton gradient across the membrane which is generated by electron transport complexes of the respiratory chain. F-type ATPases consist of two structural domains, F(1) - containing the extramembraneous catalytic core and F(0) - containing the membrane proton channel, linked together by a central stalk and a peripheral stalk. During catalysis, ATP synthesis in the catalytic domain of F(1) is coupled via a rotary mechanism of the central stalk subunits to proton translocation. Key component of the proton channel; it may play a direct role in the translocation of protons across the membrane. The polypeptide is ATP synthase subunit a (ATP6) (Brassica tournefortii (Wild turnip)).